Here is a 61-residue protein sequence, read N- to C-terminus: Small ribosomal subunit protein uS14 (61 aa).

Positions 24, 27, 40, and 43 each coordinate Zn(2+).

It belongs to the universal ribosomal protein uS14 family. Zinc-binding uS14 subfamily. In terms of assembly, part of the 30S ribosomal subunit. Contacts proteins S3 and S10. The cofactor is Zn(2+).

Functionally, binds 16S rRNA, required for the assembly of 30S particles and may also be responsible for determining the conformation of the 16S rRNA at the A site. This is Small ribosomal subunit protein uS14 from Heliobacterium modesticaldum (strain ATCC 51547 / Ice1).